Consider the following 337-residue polypeptide: 2-oxoglutarate-dependent dioxygenase 19 (337 aa).

The disordered stretch occupies residues M1–P25. The Fe2OG dioxygenase domain maps to N179–P283. Fe cation-binding residues include H208, D210, and H264. R274 is a binding site for 2-oxoglutarate.

The protein belongs to the iron/ascorbate-dependent oxidoreductase family. Fe(2+) is required as a cofactor. It depends on L-ascorbate as a cofactor. In terms of tissue distribution, expressed in shoots.

It localises to the cytoplasm. The enzyme catalyses melatonin + 2-oxoglutarate + O2 = 2-hydroxymelatonin + succinate + CO2. In terms of biological role, involved in melatonin degradation. Catalyzes the hydroxylation of melatonin to produce 2-hydroxymelatonin. The protein is 2-oxoglutarate-dependent dioxygenase 19 of Oryza sativa subsp. japonica (Rice).